We begin with the raw amino-acid sequence, 415 residues long: Corticotropin-releasing factor receptor 1 (415 aa).

Positions 1–23 (MGQRPQLRLVKALLLLGLNPVST) are cleaved as a signal peptide. Residues 24 to 111 (SLQDQQCESL…CQEILNEEKK (88 aa)) are Extracellular-facing. Disulfide bonds link C30-C54, C44-C87, and C68-C102. Residues N38, N45, N78, N90, and N98 are each glycosylated (N-linked (GlcNAc...) asparagine). The interval 99 to 108 (YSECQEILNE) is important for peptide agonist binding. Residues 112 to 142 (SKVHYHIAVIINYLGHCISLVALLVAFVLFL) traverse the membrane as a helical segment. Over 143–149 (RLRSIRC) the chain is Cytoplasmic. Residues 150 to 174 (LRNIIHWNLISAFILRNATWFVVQL) form a helical membrane-spanning segment. Topologically, residues 175 to 189 (TVSPEVHQSNVAWCR) are extracellular. Residues C188 and C258 are joined by a disulfide bond. Residues 190–218 (LVTAAYNYFHVTNFFWMFGEGCYLHTAIV) traverse the membrane as a helical segment. At 219–225 (LTYSTDR) the chain is on the cytoplasmic side. The chain crosses the membrane as a helical span at residues 226 to 253 (LRKWMFVCIGWGVPFPIIVAWAIGKLYY). Topologically, residues 254 to 269 (DNEKCWFGKRPGVYTD) are extracellular. A helical transmembrane segment spans residues 270 to 295 (YIYQGPMILVLLINFIFLFNIVRILM). An important for antagonist binding region spans residues 280-290 (LLINFIFLFNI). Over 296 to 306 (TKLRASTTSET) the chain is Cytoplasmic. Position 301 is a phosphoserine; by PKA (S301). A helical transmembrane segment spans residues 307 to 331 (IQYRKAVKATLVLLPLLGITYMLFF). Over 332-338 (VNPGEDE) the chain is Extracellular. Residues 339-368 (VSRVVFIYFNSFLESFQGFFVSVFYCFLNS) traverse the membrane as a helical segment. Residues 369–415 (EVRSAIRKRWRRWQDKHSIRARVARAMSIPTSPTRVSFHSIKQSTAV) lie on the Cytoplasmic side of the membrane.

This sequence belongs to the G-protein coupled receptor 2 family. Heterodimer; heterodimerizes with GPER1. Interacts (via N-terminal extracellular domain) with CRH and UCN. Interacts with DLG1; this inhibits endocytosis of CRHR1 after agonist binding. C-terminal Ser or Thr residues may be phosphorylated. In terms of processing, phosphorylation at Ser-301 by PKA prevents maximal coupling to Gq-protein, and thereby negatively regulates downstream signaling. As to expression, detected in brain cortex (at protein level).

The protein localises to the cell membrane. It is found in the endosome. In terms of biological role, G-protein coupled receptor for CRH (corticotropin-releasing factor) and UCN (urocortin). Has high affinity for CRH and UCN. Ligand binding causes a conformation change that triggers signaling via guanine nucleotide-binding proteins (G proteins) and down-stream effectors, such as adenylate cyclase. Promotes the activation of adenylate cyclase, leading to increased intracellular cAMP levels. Inhibits the activity of the calcium channel CACNA1H. Required for normal embryonic development of the adrenal gland and for normal hormonal responses to stress. Plays a role in the response to anxiogenic stimuli. The sequence is that of Corticotropin-releasing factor receptor 1 (Crhr1) from Mus musculus (Mouse).